We begin with the raw amino-acid sequence, 420 residues long: Tol-Pal system protein TolB (420 aa).

Positions 1–21 are cleaved as a signal peptide; the sequence is MKLFVHLVLFISLFIPYFTKA.

It belongs to the TolB family. The Tol-Pal system is composed of five core proteins: the inner membrane proteins TolA, TolQ and TolR, the periplasmic protein TolB and the outer membrane protein Pal. They form a network linking the inner and outer membranes and the peptidoglycan layer.

It localises to the periplasm. Its function is as follows. Part of the Tol-Pal system, which plays a role in outer membrane invagination during cell division and is important for maintaining outer membrane integrity. This is Tol-Pal system protein TolB from Wolbachia sp. subsp. Drosophila simulans (strain wRi).